Here is a 233-residue protein sequence, read N- to C-terminus: Large ribosomal subunit protein uL1 (233 aa).

This sequence belongs to the universal ribosomal protein uL1 family. As to quaternary structure, part of the 50S ribosomal subunit.

Its function is as follows. Binds directly to 23S rRNA. The L1 stalk is quite mobile in the ribosome, and is involved in E site tRNA release. Functionally, protein L1 is also a translational repressor protein, it controls the translation of the L11 operon by binding to its mRNA. The protein is Large ribosomal subunit protein uL1 of Vibrio vulnificus (strain CMCP6).